The chain runs to 156 residues: Small ribosomal subunit protein uS7 (156 aa).

Belongs to the universal ribosomal protein uS7 family. In terms of assembly, part of the 30S ribosomal subunit. Contacts proteins S9 and S11.

Functionally, one of the primary rRNA binding proteins, it binds directly to 16S rRNA where it nucleates assembly of the head domain of the 30S subunit. Is located at the subunit interface close to the decoding center, probably blocks exit of the E-site tRNA. This Carboxydothermus hydrogenoformans (strain ATCC BAA-161 / DSM 6008 / Z-2901) protein is Small ribosomal subunit protein uS7.